A 310-amino-acid polypeptide reads, in one-letter code: Homoserine kinase (310 aa).

P91–C101 contributes to the ATP binding site.

Belongs to the GHMP kinase family. Homoserine kinase subfamily.

The protein resides in the cytoplasm. It carries out the reaction L-homoserine + ATP = O-phospho-L-homoserine + ADP + H(+). It functions in the pathway amino-acid biosynthesis; L-threonine biosynthesis; L-threonine from L-aspartate: step 4/5. In terms of biological role, catalyzes the ATP-dependent phosphorylation of L-homoserine to L-homoserine phosphate. The polypeptide is Homoserine kinase (Escherichia coli O6:H1 (strain CFT073 / ATCC 700928 / UPEC)).